We begin with the raw amino-acid sequence, 416 residues long: Serine/threonine transporter SstT (416 aa).

The next 9 helical transmembrane spans lie at 15 to 35, 49 to 69, 82 to 102, 141 to 161, 192 to 212, 217 to 237, 288 to 308, 316 to 336, and 363 to 383; these read SLVSQILVGLVFGILLAMFMP, VGALKAVAPLLVFVLVMAAII, ILLLYLLGTFLAAAVAVVASF, ALLDANYIGILAWAIGLGIAM, LGILGLVASTLAETGFDALFG, LVVLIGCMLFIAFVVNPLIVF, VSIPLGATINMAGAAITITVL, LGMEVDLATAILLSVVATISA, and IAMQVVAVGFIIGVLQDSAET.

It belongs to the dicarboxylate/amino acid:cation symporter (DAACS) (TC 2.A.23) family.

The protein localises to the cell inner membrane. The enzyme catalyses L-serine(in) + Na(+)(in) = L-serine(out) + Na(+)(out). It carries out the reaction L-threonine(in) + Na(+)(in) = L-threonine(out) + Na(+)(out). Its function is as follows. Involved in the import of serine and threonine into the cell, with the concomitant import of sodium (symport system). This is Serine/threonine transporter SstT from Aeromonas hydrophila subsp. hydrophila (strain ATCC 7966 / DSM 30187 / BCRC 13018 / CCUG 14551 / JCM 1027 / KCTC 2358 / NCIMB 9240 / NCTC 8049).